The chain runs to 70 residues: Mu-agatoxin-Ao1b (70 aa).

An N-terminal signal peptide occupies residues 1–20; the sequence is MKAIIFFCFLSVMVFIVAEA. The propeptide occupies 21–33; that stretch reads SSLEALKIFEGER. 4 cysteine pairs are disulfide-bonded: cysteine 35–cysteine 50, cysteine 42–cysteine 55, cysteine 49–cysteine 65, and cysteine 57–cysteine 63. Asparagine 69 bears the Asparagine amide mark.

The protein belongs to the neurotoxin 07 (Beta/delta-agtx) family. 04 (aga-5) subfamily. In terms of tissue distribution, expressed by the venom gland.

It localises to the secreted. Its function is as follows. Insecticidal neurotoxin that modulates the insect Nav channel (DmNaV1/tipE (para/tipE)) in a unique manner, with both the activation and inactivation processes being affected. The voltage dependence of activation is shifted toward more hyperpolarized potentials (analogous to site 4 toxins) and a non-inactivating persistent sodium current is induced (site 3-like action). Interestingly, both effects take place in a voltage-dependent manner, producing a bell-shaped curve between -80 and 0 mV. The sequence is that of Mu-agatoxin-Ao1b from Agelena orientalis (Funnel-web spider).